Consider the following 419-residue polypeptide: UDP-N-acetylglucosamine 1-carboxyvinyltransferase (419 aa).

22–23 contacts phosphoenolpyruvate; sequence KN. Arg91 provides a ligand contact to UDP-N-acetyl-alpha-D-glucosamine. Cys115 functions as the Proton donor in the catalytic mechanism. The residue at position 115 (Cys115) is a 2-(S-cysteinyl)pyruvic acid O-phosphothioketal. Residues 120 to 124, 160 to 163, Asp305, and Val327 contribute to the UDP-N-acetyl-alpha-D-glucosamine site; these read RPVDL and KVSV.

This sequence belongs to the EPSP synthase family. MurA subfamily.

The protein localises to the cytoplasm. It catalyses the reaction phosphoenolpyruvate + UDP-N-acetyl-alpha-D-glucosamine = UDP-N-acetyl-3-O-(1-carboxyvinyl)-alpha-D-glucosamine + phosphate. The protein operates within cell wall biogenesis; peptidoglycan biosynthesis. Functionally, cell wall formation. Adds enolpyruvyl to UDP-N-acetylglucosamine. The protein is UDP-N-acetylglucosamine 1-carboxyvinyltransferase of Salmonella schwarzengrund (strain CVM19633).